Reading from the N-terminus, the 310-residue chain is Methionyl-tRNA formyltransferase (310 aa).

A (6S)-5,6,7,8-tetrahydrofolate-binding site is contributed by 111-114; sequence SLLP.

It belongs to the Fmt family.

It carries out the reaction L-methionyl-tRNA(fMet) + (6R)-10-formyltetrahydrofolate = N-formyl-L-methionyl-tRNA(fMet) + (6S)-5,6,7,8-tetrahydrofolate + H(+). Attaches a formyl group to the free amino group of methionyl-tRNA(fMet). The formyl group appears to play a dual role in the initiator identity of N-formylmethionyl-tRNA by promoting its recognition by IF2 and preventing the misappropriation of this tRNA by the elongation apparatus. The protein is Methionyl-tRNA formyltransferase of Rhodopseudomonas palustris (strain ATCC BAA-98 / CGA009).